The following is a 381-amino-acid chain: tRNA pseudouridine synthase D (381 aa).

Residue aspartate 81 is the Nucleophile of the active site. In terms of domain architecture, TRUD spans 160 to 335 (GMPNYFGSQR…TLGSRRFFWV (176 aa)).

The protein belongs to the pseudouridine synthase TruD family.

The catalysed reaction is uridine(13) in tRNA = pseudouridine(13) in tRNA. In terms of biological role, responsible for synthesis of pseudouridine from uracil-13 in transfer RNAs. The sequence is that of tRNA pseudouridine synthase D from Helicobacter pylori (strain HPAG1).